A 213-amino-acid polypeptide reads, in one-letter code: Large ribosomal subunit protein uL1 (213 aa).

Belongs to the universal ribosomal protein uL1 family. In terms of assembly, part of the 50S ribosomal subunit.

Binds directly to 23S rRNA. Probably involved in E site tRNA release. In terms of biological role, protein L1 is also a translational repressor protein, it controls the translation of its operon by binding to its mRNA. The sequence is that of Large ribosomal subunit protein uL1 from Nanoarchaeum equitans (strain Kin4-M).